The sequence spans 498 residues: Glycerol kinase (498 aa).

Residue Thr12 coordinates ADP. 3 residues coordinate ATP: Thr12, Thr13, and Ser14. Thr12 serves as a coordination point for sn-glycerol 3-phosphate. An ADP-binding site is contributed by Arg16. Sn-glycerol 3-phosphate contacts are provided by Arg82, Glu83, and Tyr134. Residues Arg82, Glu83, and Tyr134 each contribute to the glycerol site. His230 carries the post-translational modification Phosphohistidine; by HPr. Asp244 is a sn-glycerol 3-phosphate binding site. The glycerol site is built by Asp244 and Gln245. 2 residues coordinate ADP: Thr266 and Gly309. Residues Thr266, Gly309, Gln313, and Gly410 each coordinate ATP. ADP contacts are provided by Gly410 and Asn414.

It belongs to the FGGY kinase family. Homotetramer and homodimer (in equilibrium). Post-translationally, the phosphoenolpyruvate-dependent sugar phosphotransferase system (PTS), including enzyme I, and histidine-containing protein (HPr) are required for the phosphorylation, which leads to the activation of the enzyme.

The enzyme catalyses glycerol + ATP = sn-glycerol 3-phosphate + ADP + H(+). The protein operates within polyol metabolism; glycerol degradation via glycerol kinase pathway; sn-glycerol 3-phosphate from glycerol: step 1/1. Activated by phosphorylation and inhibited by fructose 1,6-bisphosphate (FBP). Key enzyme in the regulation of glycerol uptake and metabolism. Catalyzes the phosphorylation of glycerol to yield sn-glycerol 3-phosphate. This Staphylococcus aureus (strain Mu50 / ATCC 700699) protein is Glycerol kinase.